The primary structure comprises 178 residues: Major non-capsid protein (178 aa).

This sequence belongs to the tenuiviruses NCP family.

It localises to the host cytoplasm. Induces the formation of large intracellular inclusion body, organized in amorphous and crystalline arrays. Presumably the main cause of the stripe disease observed in host. In Rice stripe virus (isolate T) (RSV), this protein is Major non-capsid protein.